A 156-amino-acid polypeptide reads, in one-letter code: Snaclec A6 (156 aa).

The signal sequence occupies residues 1-23; it reads MGRSISVSFGLLVVFLSLSGTGA. 3 disulfides stabilise this stretch: Cys-27–Cys-38, Cys-55–Cys-154, and Cys-129–Cys-146. The C-type lectin domain maps to 34 to 155; the sequence is HEGHCYKVFN…CGKPYRFTCE (122 aa).

It belongs to the snaclec family. As to quaternary structure, heterodimer; disulfide-linked. Expressed by the venom gland.

It is found in the secreted. Interferes with one step of hemostasis (modulation of platelet aggregation, or coagulation cascade, for example). This is Snaclec A6 from Macrovipera lebetinus (Levantine viper).